A 369-amino-acid polypeptide reads, in one-letter code: 4-hydroxy-3-methylbut-2-en-1-yl diphosphate synthase (flavodoxin) (369 aa).

Positions 270, 273, 305, and 312 each coordinate [4Fe-4S] cluster.

It belongs to the IspG family. [4Fe-4S] cluster serves as cofactor.

It catalyses the reaction (2E)-4-hydroxy-3-methylbut-2-enyl diphosphate + oxidized [flavodoxin] + H2O + 2 H(+) = 2-C-methyl-D-erythritol 2,4-cyclic diphosphate + reduced [flavodoxin]. Its pathway is isoprenoid biosynthesis; isopentenyl diphosphate biosynthesis via DXP pathway; isopentenyl diphosphate from 1-deoxy-D-xylulose 5-phosphate: step 5/6. In terms of biological role, converts 2C-methyl-D-erythritol 2,4-cyclodiphosphate (ME-2,4cPP) into 1-hydroxy-2-methyl-2-(E)-butenyl 4-diphosphate. This is 4-hydroxy-3-methylbut-2-en-1-yl diphosphate synthase (flavodoxin) from Pseudomonas putida (strain GB-1).